Reading from the N-terminus, the 238-residue chain is Uridylate kinase (238 aa).

13–16 (KLSG) contributes to the ATP binding site. Gly53 serves as a coordination point for UMP. ATP contacts are provided by Gly54 and Arg58. UMP is bound by residues Asp73 and 134 to 141 (AGLPYFST). ATP contacts are provided by Asn162, Tyr168, and Asp171.

Belongs to the UMP kinase family. In terms of assembly, homohexamer.

The protein resides in the cytoplasm. The catalysed reaction is UMP + ATP = UDP + ADP. The protein operates within pyrimidine metabolism; CTP biosynthesis via de novo pathway; UDP from UMP (UMPK route): step 1/1. Its activity is regulated as follows. Inhibited by UTP. Functionally, catalyzes the reversible phosphorylation of UMP to UDP. This is Uridylate kinase from Clavibacter michiganensis subsp. michiganensis (strain NCPPB 382).